Consider the following 93-residue polypeptide: Small ribosomal subunit protein uS19 (93 aa).

It belongs to the universal ribosomal protein uS19 family.

Functionally, protein S19 forms a complex with S13 that binds strongly to the 16S ribosomal RNA. The protein is Small ribosomal subunit protein uS19 of Desulfitobacterium hafniense (strain DSM 10664 / DCB-2).